Reading from the N-terminus, the 522-residue chain is 2-isopropylmalate synthase (522 aa).

The Pyruvate carboxyltransferase domain maps to 5-267; that stretch reads VIIFDTTLRD…YTNINAREIH (263 aa). 4 residues coordinate Mn(2+): D14, H202, H204, and N238. The interval 392–522 is regulatory domain; sequence VMEQLVVQSD…MQQTRELGGV (131 aa).

This sequence belongs to the alpha-IPM synthase/homocitrate synthase family. LeuA type 1 subfamily. In terms of assembly, homodimer. It depends on Mn(2+) as a cofactor.

It localises to the cytoplasm. The enzyme catalyses 3-methyl-2-oxobutanoate + acetyl-CoA + H2O = (2S)-2-isopropylmalate + CoA + H(+). It functions in the pathway amino-acid biosynthesis; L-leucine biosynthesis; L-leucine from 3-methyl-2-oxobutanoate: step 1/4. In terms of biological role, catalyzes the condensation of the acetyl group of acetyl-CoA with 3-methyl-2-oxobutanoate (2-ketoisovalerate) to form 3-carboxy-3-hydroxy-4-methylpentanoate (2-isopropylmalate). The polypeptide is 2-isopropylmalate synthase (Shewanella amazonensis (strain ATCC BAA-1098 / SB2B)).